The chain runs to 351 residues: Holliday junction branch migration complex subunit RuvB (351 aa).

The segment at 4 to 185 (HDRELVSPEA…FGFVAHMDFY (182 aa)) is large ATPase domain (RuvB-L). Residues Leu24, Arg25, Gly66, Lys69, Thr70, Thr71, 132–134 (EDF), Arg175, Tyr185, and Arg222 contribute to the ATP site. Mg(2+) is bound at residue Thr70. Residues 186–256 (SPEELELILH…CARAALSLYE (71 aa)) form a small ATPAse domain (RuvB-S) region. Residues 259–351 (DEGLDRLDRA…AALFDPDEEP (93 aa)) are head domain (RuvB-H). Arg314 and Arg319 together coordinate DNA.

The protein belongs to the RuvB family. In terms of assembly, homohexamer. Forms an RuvA(8)-RuvB(12)-Holliday junction (HJ) complex. HJ DNA is sandwiched between 2 RuvA tetramers; dsDNA enters through RuvA and exits via RuvB. An RuvB hexamer assembles on each DNA strand where it exits the tetramer. Each RuvB hexamer is contacted by two RuvA subunits (via domain III) on 2 adjacent RuvB subunits; this complex drives branch migration. In the full resolvosome a probable DNA-RuvA(4)-RuvB(12)-RuvC(2) complex forms which resolves the HJ.

The protein resides in the cytoplasm. The enzyme catalyses ATP + H2O = ADP + phosphate + H(+). The RuvA-RuvB-RuvC complex processes Holliday junction (HJ) DNA during genetic recombination and DNA repair, while the RuvA-RuvB complex plays an important role in the rescue of blocked DNA replication forks via replication fork reversal (RFR). RuvA specifically binds to HJ cruciform DNA, conferring on it an open structure. The RuvB hexamer acts as an ATP-dependent pump, pulling dsDNA into and through the RuvAB complex. RuvB forms 2 homohexamers on either side of HJ DNA bound by 1 or 2 RuvA tetramers; 4 subunits per hexamer contact DNA at a time. Coordinated motions by a converter formed by DNA-disengaged RuvB subunits stimulates ATP hydrolysis and nucleotide exchange. Immobilization of the converter enables RuvB to convert the ATP-contained energy into a lever motion, pulling 2 nucleotides of DNA out of the RuvA tetramer per ATP hydrolyzed, thus driving DNA branch migration. The RuvB motors rotate together with the DNA substrate, which together with the progressing nucleotide cycle form the mechanistic basis for DNA recombination by continuous HJ branch migration. Branch migration allows RuvC to scan DNA until it finds its consensus sequence, where it cleaves and resolves cruciform DNA. The sequence is that of Holliday junction branch migration complex subunit RuvB from Thermobifida fusca (strain YX).